Reading from the N-terminus, the 94-residue chain is Fungal defensin scedosporisin-2 (94 aa).

The first 25 residues, 1–25 (MKFSNISIAALFTILASTAMAAPAA), serve as a signal peptide directing secretion. The propeptide occupies 26-56 (DSPDSIVAREPAPVEETYEAPSGLEKRGFGC). Residues phenylalanine 54, glycine 55, and cysteine 56 each contribute to the beta-D-GlcNAc-(1-&gt;4)-Mur2Ac(oyl-L-Ala-gamma-D-Glu-L-Lys-D-Ala-D-Ala)-di-trans,octa-cis-undecaprenyl diphosphate site. 3 disulfides stabilise this stretch: cysteine 56–cysteine 78, cysteine 63–cysteine 91, and cysteine 67–cysteine 93. The segment at 57 to 60 (PGSE) is interaction site with membrane interface. Histidine 66 serves as a coordination point for beta-D-GlcNAc-(1-&gt;4)-Mur2Ac(oyl-L-Ala-gamma-D-Glu-L-Lys-D-Ala-D-Ala)-di-trans,octa-cis-undecaprenyl diphosphate. The interaction site with membrane interface stretch occupies residues 83 to 90 (IPFVGRPR). Cysteine 91 is a beta-D-GlcNAc-(1-&gt;4)-Mur2Ac(oyl-L-Ala-gamma-D-Glu-L-Lys-D-Ala-D-Ala)-di-trans,octa-cis-undecaprenyl diphosphate binding site.

The protein belongs to the invertebrate defensin family.

It localises to the secreted. The protein localises to the target cell membrane. Its function is as follows. Antibacterial peptide potently active against Gram-positive bacteria. May act by selectively inhibiting peptidoglycan biosynthesis through complex formation with the cell wall precursor lipid II (1:1 molar ratio) thus inhibiting cell wall synthesis. Shows remarkably activity against resistant isolates such as methicillin-resistant Staphylococcus aureus (MRSA) and vancomycin-resistant Enterococci (VRE) at the concentration of micromolar level. Does not act by destroying the membrane integrity, which is consistent with its nonamphiphilic architecture. Acts more rapidly than vancomycin. Shows low hemolysis and cytotoxicity and high serum stability. In vivo, is as efficient as vancomycin to protect mouse peritonitis models from MRSA infections. This is Fungal defensin scedosporisin-2 from Pseudallescheria apiosperma (Scedosporium apiospermum).